The primary structure comprises 676 residues: Heat shock cognate HSP70 protein (676 aa).

The interval 613–676 is disordered; that stretch reads SARREGKDGW…RIEAINANTE (64 aa). Residues 630–646 are compositionally biased toward acidic residues; that stretch reads GSGDDNDGDDNSDEEDE.

It belongs to the heat shock protein 70 family.

In Trypanosoma brucei brucei, this protein is Heat shock cognate HSP70 protein.